Consider the following 226-residue polypeptide: UPF0319 protein SO_1816 (226 aa).

The signal sequence occupies residues 1-21; that stretch reads MKSLLPISSLLVLLGSASVSA.

Belongs to the UPF0319 family.

The polypeptide is UPF0319 protein SO_1816 (Shewanella oneidensis (strain ATCC 700550 / JCM 31522 / CIP 106686 / LMG 19005 / NCIMB 14063 / MR-1)).